The primary structure comprises 130 residues: MIDEKSIEFDFPEGILGFENIKKFIIKDSKYKPFSIMQSINKDVSFLVTSPFNFLSEYLPNIQEKDWSDIKAKEEDEKVILCIINMHVNDYKDITANLKAPIIINKKKLLGKQAICTNEKYSLHHKVFKE.

This sequence belongs to the FliW family. Interacts with translational regulator CsrA and flagellin(s).

It localises to the cytoplasm. In terms of biological role, acts as an anti-CsrA protein, binds CsrA and prevents it from repressing translation of its target genes, one of which is flagellin. Binds to flagellin and participates in the assembly of the flagellum. The protein is Flagellar assembly factor FliW of Borreliella burgdorferi (strain ATCC 35210 / DSM 4680 / CIP 102532 / B31) (Borrelia burgdorferi).